Reading from the N-terminus, the 435-residue chain is GTPase Der (435 aa).

EngA-type G domains are found at residues 4 to 167 (PIVA…SPDA) and 175 to 350 (ISFS…ENKN). Residues 10–17 (GQPNVGKS), 57–61 (DTGGI), 119–122 (NKAD), 181–188 (GRPNVGKS), 228–232 (DTAGI), and 293–296 (NKWD) each bind GTP. The KH-like domain maps to 351-435 (QRIQSSVLND…PIKILPRKRK (85 aa)).

This sequence belongs to the TRAFAC class TrmE-Era-EngA-EngB-Septin-like GTPase superfamily. EngA (Der) GTPase family. In terms of assembly, associates with the 50S ribosomal subunit.

Its function is as follows. GTPase that plays an essential role in the late steps of ribosome biogenesis. This Lactobacillus delbrueckii subsp. bulgaricus (strain ATCC 11842 / DSM 20081 / BCRC 10696 / JCM 1002 / NBRC 13953 / NCIMB 11778 / NCTC 12712 / WDCM 00102 / Lb 14) protein is GTPase Der.